The chain runs to 273 residues: Dermonecrotic toxin LapSicTox-alphaIB2 (273 aa).

His-5 is an active-site residue. Glu-25 and Asp-27 together coordinate Mg(2+). Catalysis depends on His-41, which acts as the Nucleophile. 2 cysteine pairs are disulfide-bonded: Cys-45–Cys-51 and Cys-47–Cys-190. Asp-85 serves as a coordination point for Mg(2+). Asn-250 carries N-linked (GlcNAc...) asparagine glycosylation.

The protein belongs to the arthropod phospholipase D family. Class II subfamily. Mg(2+) serves as cofactor. As to expression, expressed by the venom gland.

It localises to the secreted. The enzyme catalyses an N-(acyl)-sphingosylphosphocholine = an N-(acyl)-sphingosyl-1,3-cyclic phosphate + choline. The catalysed reaction is an N-(acyl)-sphingosylphosphoethanolamine = an N-(acyl)-sphingosyl-1,3-cyclic phosphate + ethanolamine. It carries out the reaction a 1-acyl-sn-glycero-3-phosphocholine = a 1-acyl-sn-glycero-2,3-cyclic phosphate + choline. It catalyses the reaction a 1-acyl-sn-glycero-3-phosphoethanolamine = a 1-acyl-sn-glycero-2,3-cyclic phosphate + ethanolamine. In terms of biological role, dermonecrotic toxins cleave the phosphodiester linkage between the phosphate and headgroup of certain phospholipids (sphingolipid and lysolipid substrates), forming an alcohol (often choline) and a cyclic phosphate. This toxin acts on sphingomyelin (SM). It may also act on ceramide phosphoethanolamine (CPE), lysophosphatidylcholine (LPC) and lysophosphatidylethanolamine (LPE), but not on lysophosphatidylserine (LPS), and lysophosphatidylglycerol (LPG). It acts by transphosphatidylation, releasing exclusively cyclic phosphate products as second products. Induces dermonecrosis, hemolysis, increased vascular permeability, edema, inflammatory response, and platelet aggregation. This chain is Dermonecrotic toxin LapSicTox-alphaIB2, found in Loxosceles apachea (Apache recluse spider).